The sequence spans 134 residues: Lymphocyte antigen 6S (134 aa).

The N-terminal stretch at 1 to 26 (MSSLQAMKTLSLVLLVALLSMERAQG) is a signal peptide. The 49-residue stretch at 28-76 (RCYRCLAVLEGASCSVVSCPFLDGVCVSQKVSVFGSKVRGENKLSLLSC) folds into the UPAR/Ly6 domain. Disulfide bonds link C29/C53, C32/C41, C76/C98, and C99/C104. N105 is lipidated: GPI-anchor amidated asparagine. Residues 106–134 (AVVLAASSPWALCVQLLLSLGSVFLWALL) constitute a propeptide, removed in mature form.

Its subcellular location is the cell membrane. This chain is Lymphocyte antigen 6S, found in Homo sapiens (Human).